Here is a 293-residue protein sequence, read N- to C-terminus: Large ribosomal RNA subunit accumulation protein YCED homolog 1, chloroplastic (293 aa).

The transit peptide at 1–42 directs the protein to the chloroplast; it reads MYYPQPTVSLAAAVALLRPSLRRHSQRASSLLRSSTPPPWVS.

Belongs to the DUF177 domain family. In terms of tissue distribution, highly expressed in shoots and leaves. Detected in roots, embryos and endosperm.

The protein resides in the plastid. It is found in the chloroplast. In terms of biological role, plays a role in synthesis, processing and/or stability of 23S rRNA. Required for embryogenesis. May be involved in RPL23 transcript levels regulation in non-photosynthetic plastids. This Zea mays (Maize) protein is Large ribosomal RNA subunit accumulation protein YCED homolog 1, chloroplastic.